A 295-amino-acid chain; its full sequence is Sulfotransferase 1A1 (295 aa).

3'-phosphoadenylyl sulfate is bound at residue 48 to 53 (KSGTTW). 106-108 (KTH) contributes to the substrate binding site. The Proton acceptor role is filled by His108. 3'-phosphoadenylyl sulfate is bound by residues Arg130, Ser138, Tyr193, 227–232 (TSFKEM), and 255–259 (FMRKG). Ser138 is modified (phosphoserine).

Belongs to the sulfotransferase 1 family. As to quaternary structure, homodimer. As to expression, distal lung parenchyma.

It is found in the cytoplasm. It catalyses the reaction a phenol + 3'-phosphoadenylyl sulfate = an aryl sulfate + adenosine 3',5'-bisphosphate + H(+). The catalysed reaction is 17beta-estradiol + 3'-phosphoadenylyl sulfate = 17beta-estradiol 3-sulfate + adenosine 3',5'-bisphosphate + H(+). It carries out the reaction 4-ethylphenol + 3'-phosphoadenylyl sulfate = 4-ethylphenyl sulfate + adenosine 3',5'-bisphosphate + H(+). The enzyme catalyses 4-nitrophenol + 3'-phosphoadenylyl sulfate = 4-nitrophenyl sulfate + adenosine 3',5'-bisphosphate. It catalyses the reaction dopamine + 3'-phosphoadenylyl sulfate = dopamine 3-O-sulfate + adenosine 3',5'-bisphosphate + H(+). The catalysed reaction is dopamine + 3'-phosphoadenylyl sulfate = dopamine 4-O-sulfate + adenosine 3',5'-bisphosphate + H(+). It carries out the reaction 3,3',5-triiodo-L-thyronine + 3'-phosphoadenylyl sulfate = 3,3',5-triiodo-L-thyronine sulfate + adenosine 3',5'-bisphosphate + H(+). The enzyme catalyses 3,3',5'-triiodo-L-thyronine + 3'-phosphoadenylyl sulfate = 3,3',5'-triiodo-L-thyronine sulfate + adenosine 3',5'-bisphosphate + H(+). It catalyses the reaction 3,3'-diiodo-L-thyronine + 3'-phosphoadenylyl sulfate = 3,3'-diiodo-L-thyronine sulfate + adenosine 3',5'-bisphosphate + H(+). The catalysed reaction is L-thyroxine + 3'-phosphoadenylyl sulfate = L-thyroxine sulfate + adenosine 3',5'-bisphosphate + H(+). Functionally, sulfotransferase that utilizes 3'-phospho-5'-adenylyl sulfate (PAPS) as sulfonate donor to catalyze the sulfate conjugation of a wide variety of acceptor molecules bearing a hydroxyl or an amine group. Sulfonation increases the water solubility of most compounds, and therefore their renal excretion, but it can also result in bioactivation to form active metabolites. Displays broad substrate specificity for small phenolic compounds. Plays an important role in the sulfonation of endogenous molecules such as steroid hormones. Mediates also the metabolic activation of carcinogenic N-hydroxyarylamines leading to highly reactive intermediates capable of forming DNA adducts, potentially resulting in mutagenesis. May play a role in gut microbiota-host metabolic interaction. O-sulfonates 4-ethylphenol (4-EP), a dietary tyrosine-derived metabolite produced by gut bacteria. The product 4-EPS crosses the blood-brain barrier and may negatively regulate oligodendrocyte maturation and myelination, affecting the functional connectivity of different brain regions associated with the limbic system. Catalyzes the sulfate conjugation of dopamine. Catalyzes the sulfation of T4 (L-thyroxine/3,5,3',5'-tetraiodothyronine), T3 (3,5,3'-triiodothyronine), rT3 (3,3',5'-triiodothyronine) and 3,3'-T2 (3,3'-diiodothyronine), with a substrate preference of 3,3'-T2 &gt; rT3 &gt; T3 &gt; T4. This chain is Sulfotransferase 1A1 (SULT1A1), found in Bos taurus (Bovine).